The primary structure comprises 331 residues: Aromatic 2-oxoacid reductase (331 aa).

NAD(+) is bound by residues 154–155, Asp175, 205–206, Asn211, 232–234, and Asp258; these read RI, AP, and AAR. Residue Arg234 is part of the active site. Glu263 is an active-site residue. His295 serves as the catalytic Proton donor.

This sequence belongs to the D-isomer specific 2-hydroxyacid dehydrogenase family.

The catalysed reaction is (R)-3-phenyllactate + NAD(+) = 3-phenylpyruvate + NADH + H(+). It catalyses the reaction (2R)-2-hydroxy-3-(4-hydroxyphenyl)propanoate + NAD(+) = 3-(4-hydroxyphenyl)pyruvate + NADH + H(+). It carries out the reaction 3-(indol-3-yl)lactate + NAD(+) = indole-3-pyruvate + NADH + H(+). The protein operates within amino-acid degradation. In terms of biological role, essential for the reductive metabolism of L-phenylalanine, L-tyrosine and L-tryptophan. Catalyzes the conversion of phenylpyruvic acid to phenyllactic acid, 4-hydroxy-phenylpyruvic acid to 4-hydroxy-phenyllactic acid, and indolepyruvic acid to indolelactic acid. The chain is Aromatic 2-oxoacid reductase from Clostridium sporogenes (strain ATCC 15579).